The primary structure comprises 140 residues: Large ribosomal subunit protein uL13 (140 aa).

Part of the 50S ribosomal subunit.

This protein is one of the early assembly proteins of the 50S ribosomal subunit, although it is not seen to bind rRNA by itself. It is important during the early stages of 50S assembly. The chain is Large ribosomal subunit protein uL13 from Thermus thermophilus (strain ATCC 27634 / DSM 579 / HB8).